The chain runs to 220 residues: Putative amino-acid transporter YisU (220 aa).

Transmembrane regions (helical) follow at residues 15–35 (FFSM…ILPL), 67–87 (TLLI…LPVF), 89–109 (TVMM…TWNI), 128–148 (AFAA…IGVI), 161–181 (WLFM…LAIA), and 195–215 (MLIV…YFGV).

Belongs to the LysE/ArgO transporter (TC 2.A.75) family.

Its subcellular location is the cell membrane. The chain is Putative amino-acid transporter YisU (yisU) from Bacillus subtilis (strain 168).